The chain runs to 77 residues: Acyl carrier protein (77 aa).

Positions 2 to 77 (STVEERVKKI…DAIDYIVAHT (76 aa)) constitute a Carrier domain. Ser37 carries the O-(pantetheine 4'-phosphoryl)serine modification.

This sequence belongs to the acyl carrier protein (ACP) family. Post-translationally, 4'-phosphopantetheine is transferred from CoA to a specific serine of apo-ACP by AcpS. This modification is essential for activity because fatty acids are bound in thioester linkage to the sulfhydryl of the prosthetic group.

The protein localises to the cytoplasm. It participates in lipid metabolism; fatty acid biosynthesis. Its function is as follows. Carrier of the growing fatty acid chain in fatty acid biosynthesis. This is Acyl carrier protein from Marinobacter nauticus (strain ATCC 700491 / DSM 11845 / VT8) (Marinobacter aquaeolei).